The primary structure comprises 234 residues: Triggering receptor expressed on myeloid cells 1 (234 aa).

Positions 1-20 (MRKTRLWGLLWMLFVSELRA) are cleaved as a signal peptide. At 21-205 (ATKLTEEKYE…TDIIRVPVFN (185 aa)) the chain is on the extracellular side. Positions 26-134 (EEKYELKEGQ…LFDRIRLVVT (109 aa)) constitute an Ig-like V-type domain. The cysteines at positions 41 and 113 are disulfide-linked. N-linked (GlcNAc...) asparagine glycans are attached at residues asparagine 146, asparagine 191, and asparagine 194. A helical transmembrane segment spans residues 206-226 (IVILLAGGFLSKSLVFSVLFA). At 227 to 234 (VTLRSFVP) the chain is on the cytoplasmic side.

Monomer. Homomultimer; when activated. Interacts with TYROBP/DAP12. Interacts with TLR4. Post-translationally, glycosylated. In terms of tissue distribution, mostly expressed by immune cells of the myeloid lineage, such as monocytes, macrophages, neutrophils and dendritic cells. Expression is associated with a mature stage of myeloid development. Highly expressed in adult liver, lung and spleen than in corresponding fetal tissue. Also expressed in the lymph node, placenta, spinal cord and heart tissues. Isoform 2 was detected in the lung, liver and mature monocytes.

Its subcellular location is the cell membrane. The protein resides in the secreted. Cell surface receptor that plays important roles in innate and adaptive immunity by amplifying inflammatory responses. Upon activation by various ligands such as PGLYRP1, HMGB1 or HSP70, multimerizes and forms a complex with transmembrane adapter TYROBP/DAP12. In turn, initiates a SYK-mediated cascade of tyrosine phosphorylation, activating multiple downstream mediators such as BTK, MAPK1, MAPK3 or phospholipase C-gamma. This cascade promotes the neutrophil- and macrophage-mediated release of pro-inflammatory cytokines and/or chemokines, as well as their migration and thereby amplifies inflammatory responses that are triggered by bacterial and fungal infections. By also promoting the amplification of inflammatory signals that are initially triggered by Toll-like receptor (TLR) and NOD-like receptor engagement, plays a major role in the pathophysiology of acute and chronic inflammatory diseases of different etiologies including septic shock and atherosclerosis. Its function is as follows. Acts as a decoy receptor, counterbalancing TREM1 pro-inflammatory activity through the neutralization of its ligand. The sequence is that of Triggering receptor expressed on myeloid cells 1 (TREM1) from Homo sapiens (Human).